Here is a 362-residue protein sequence, read N- to C-terminus: Glutamate 5-kinase (362 aa).

Lysine 3 provides a ligand contact to ATP. Substrate is bound by residues serine 43, aspartate 128, and asparagine 140. ATP-binding positions include threonine 160–aspartate 161 and threonine 202–lysine 208. The region spanning alanine 267–serine 348 is the PUA domain.

Belongs to the glutamate 5-kinase family.

The protein resides in the cytoplasm. It catalyses the reaction L-glutamate + ATP = L-glutamyl 5-phosphate + ADP. The protein operates within amino-acid biosynthesis; L-proline biosynthesis; L-glutamate 5-semialdehyde from L-glutamate: step 1/2. Functionally, catalyzes the transfer of a phosphate group to glutamate to form L-glutamate 5-phosphate. This Xanthomonas euvesicatoria pv. vesicatoria (strain 85-10) (Xanthomonas campestris pv. vesicatoria) protein is Glutamate 5-kinase.